A 344-amino-acid polypeptide reads, in one-letter code: MLTEQQTLELFPENWERNEQVLLKYPDGLPKDVLADQRVDNTESQVKDEITSNITNQTQILLPADSFPQYGSYPNNSELDYVVCTKCDRPFLSEYIEDHHSSCNGIKPPKPQFEPVANSQVLNKDVNNGNNAPIKNGVKSTAKGSAGNHEKNSVNGQKNPEMPPKRRKTEENKKPTKSALPKKEASKKKNPKVKGPVDVEKQCGVLLPNGQMCARSLTCKTHSMSSKRAVPGRSQPYDVLLAACQKKNQVKIQRQILETAKESEDNQHQAPVDSDEEVSFIMNVLQKSGNQPLEQKVFLPVKRRHSYFRTRELIAAAFRHGEQGMQVTGTILGRVIPFSARQPL.

Residues 123–143 show a composition bias toward polar residues; it reads NKDVNNGNNAPIKNGVKSTAK. The tract at residues 123 to 196 is disordered; that stretch reads NKDVNNGNNA…KKKNPKVKGP (74 aa). The region spanning 190–256 is the SCA7 domain; the sequence is NPKVKGPVDV…KNQVKIQRQI (67 aa).

This sequence belongs to the ataxin-7 family. As to quaternary structure, component of the 1.8 MDa SAGA (Spt-Ada-Gcn5 acetyltransferase) complex, which is composed of 19 subunits tra1, spt7, taf5, ngg1/ada3, sgf73, spt20, spt8, taf12, taf6, hfi1/ada1, ubp8, gcn5, ada2, spt3, sgf29, taf10, taf9, sgf11 and sus1. The SAGA complex is composed of 4 modules, namely the HAT (histone acetyltransferase) module (gcn5, ada2, ngg1/ada3 and sgf29), the DUB (deubiquitinating) module (ubp8, sgf11, sgf73 and sus1), the core or TAF (TBP-associated factor) module (taf5, taf6, taf9, taf10 and taf12), and the Tra1 or SPT (Suppressor of Ty) module (tra1, hfi1/ada1, spt3, spt7, spt8 and spt20). The Tra1/SPT module binds activators, the core module recruits TBP (TATA-binding protein), the HAT module contains the histone H3 acetyltransferase gcn5, and the DUB module comprises the histone H2B deubiquitinase ubp8. Interacts with the RITS subunits ago1 and chp1.

It localises to the nucleus. Its function is as follows. Component of the transcription coactivator SAGA complex. SAGA acts as a general cofactor required for essentially all RNA polymerase II transcription. At the promoters, SAGA is required for transcription pre-initiation complex (PIC) recruitment. It influences RNA polymerase II transcriptional activity through different activities such as TBP interaction (via core/TAF module) and promoter selectivity, interaction with transcription activators (via Tra1/SPT module), and chromatin modification through histone acetylation (via HAT module) and deubiquitination (via DUB module). SAGA preferentially acetylates histones H3 (to form H3K9ac, H3K14ac, H3K18ac and H3K23ac) and H2B and deubiquitinates histone H2B. SAGA interacts with DNA via upstream activating sequences (UASs). Sgf73 tethers the DUB module to the rest of the SAGA complex through its central domain and activates the ubiquitin hydrolase ubp8 by maintaining its catalytic domain in an active conformation. Sgf73 mediates recruitment of the TREX-2 mRNA export factors sac3 and thp1 to SAGA, which is crucial to target TREX-2 to the nuclear pore complex (NPC) necessary for export of mRNA. Upon environmental stress, involved in the bypass of the canonical mRNA export process for the immediate export of stress-related transcripts to maintain proteostasis. Independent on its function in SAGA, promotes the assembly of the RNA-induced transcriptional silencing complex (RITS) and is required for pericentromeric heterochromatin silencing and the generation of siRNA. In Schizosaccharomyces pombe (strain 972 / ATCC 24843) (Fission yeast), this protein is SAGA complex subunit Sgf73 (sgf73).